Here is a 318-residue protein sequence, read N- to C-terminus: Transaldolase (318 aa).

Catalysis depends on Lys132, which acts as the Schiff-base intermediate with substrate.

It belongs to the transaldolase family. Type 1 subfamily. Homodimer.

The protein resides in the cytoplasm. It catalyses the reaction D-sedoheptulose 7-phosphate + D-glyceraldehyde 3-phosphate = D-erythrose 4-phosphate + beta-D-fructose 6-phosphate. Its pathway is carbohydrate degradation; pentose phosphate pathway; D-glyceraldehyde 3-phosphate and beta-D-fructose 6-phosphate from D-ribose 5-phosphate and D-xylulose 5-phosphate (non-oxidative stage): step 2/3. Transaldolase is important for the balance of metabolites in the pentose-phosphate pathway. The polypeptide is Transaldolase (Shewanella sediminis (strain HAW-EB3)).